Reading from the N-terminus, the 88-residue chain is Small ribosomal subunit protein bS16 (88 aa).

It belongs to the bacterial ribosomal protein bS16 family.

The polypeptide is Small ribosomal subunit protein bS16 (Geobacter sp. (strain M21)).